A 375-amino-acid polypeptide reads, in one-letter code: Lipid-A-disaccharide synthase (375 aa).

This sequence belongs to the LpxB family.

It catalyses the reaction a lipid X + a UDP-2-N,3-O-bis[(3R)-3-hydroxyacyl]-alpha-D-glucosamine = a lipid A disaccharide + UDP + H(+). It functions in the pathway bacterial outer membrane biogenesis; LPS lipid A biosynthesis. In terms of biological role, condensation of UDP-2,3-diacylglucosamine and 2,3-diacylglucosamine-1-phosphate to form lipid A disaccharide, a precursor of lipid A, a phosphorylated glycolipid that anchors the lipopolysaccharide to the outer membrane of the cell. The protein is Lipid-A-disaccharide synthase of Pseudomonas entomophila (strain L48).